Here is a 367-residue protein sequence, read N- to C-terminus: Peptide chain release factor 2 (367 aa).

N5-methylglutamine is present on glutamine 250.

The protein belongs to the prokaryotic/mitochondrial release factor family. In terms of processing, methylated by PrmC. Methylation increases the termination efficiency of RF2.

The protein resides in the cytoplasm. Peptide chain release factor 2 directs the termination of translation in response to the peptide chain termination codons UGA and UAA. The sequence is that of Peptide chain release factor 2 from Kineococcus radiotolerans (strain ATCC BAA-149 / DSM 14245 / SRS30216).